The following is a 327-amino-acid chain: Biotin synthase (327 aa).

Positions 49–275 (RFGREVSLCS…VNPHAEVRMA (227 aa)) constitute a Radical SAM core domain. 3 residues coordinate [4Fe-4S] cluster: C67, C71, and C74. 4 residues coordinate [2Fe-2S] cluster: S112, C143, C203, and R273.

Belongs to the radical SAM superfamily. Biotin synthase family. Homodimer. Requires [4Fe-4S] cluster as cofactor. [2Fe-2S] cluster serves as cofactor.

It catalyses the reaction (4R,5S)-dethiobiotin + (sulfur carrier)-SH + 2 reduced [2Fe-2S]-[ferredoxin] + 2 S-adenosyl-L-methionine = (sulfur carrier)-H + biotin + 2 5'-deoxyadenosine + 2 L-methionine + 2 oxidized [2Fe-2S]-[ferredoxin]. It functions in the pathway cofactor biosynthesis; biotin biosynthesis; biotin from 7,8-diaminononanoate: step 2/2. In terms of biological role, catalyzes the conversion of dethiobiotin (DTB) to biotin by the insertion of a sulfur atom into dethiobiotin via a radical-based mechanism. This chain is Biotin synthase, found in Maridesulfovibrio salexigens (strain ATCC 14822 / DSM 2638 / NCIMB 8403 / VKM B-1763) (Desulfovibrio salexigens).